The following is a 119-amino-acid chain: Large ribosomal subunit protein uL24 (119 aa).

The protein belongs to the universal ribosomal protein uL24 family. As to quaternary structure, part of the 50S ribosomal subunit.

Functionally, one of two assembly initiator proteins, it binds directly to the 5'-end of the 23S rRNA, where it nucleates assembly of the 50S subunit. One of the proteins that surrounds the polypeptide exit tunnel on the outside of the subunit. The polypeptide is Large ribosomal subunit protein uL24 (Clavibacter michiganensis subsp. michiganensis (strain NCPPB 382)).